The chain runs to 452 residues: Bifunctional protein GlmU (452 aa).

Residues 1–232 (MTARNSLTIV…EDEVRGINTK (232 aa)) are pyrophosphorylase. UDP-N-acetyl-alpha-D-glucosamine is bound by residues 11–14 (LAAG), lysine 25, glutamine 78, and 83–84 (GT). Aspartate 108 contacts Mg(2+). Residues glycine 144, glutamate 158, asparagine 173, and asparagine 230 each contribute to the UDP-N-acetyl-alpha-D-glucosamine site. Mg(2+) is bound at residue asparagine 230. Residues 233 to 253 (AQLAEAETVMQTRLRLAAMAA) are linker. Residues 254-452 (GVTLIAPETV…KSRHRKPKAH (199 aa)) are N-acetyltransferase. Residues arginine 319 and lysine 337 each coordinate UDP-N-acetyl-alpha-D-glucosamine. Residue histidine 349 is the Proton acceptor of the active site. UDP-N-acetyl-alpha-D-glucosamine contacts are provided by tyrosine 352 and asparagine 363. Residues alanine 366, 372–373 (NY), serine 391, serine 409, and arginine 426 each bind acetyl-CoA.

This sequence in the N-terminal section; belongs to the N-acetylglucosamine-1-phosphate uridyltransferase family. The protein in the C-terminal section; belongs to the transferase hexapeptide repeat family. Homotrimer. It depends on Mg(2+) as a cofactor.

It localises to the cytoplasm. It carries out the reaction alpha-D-glucosamine 1-phosphate + acetyl-CoA = N-acetyl-alpha-D-glucosamine 1-phosphate + CoA + H(+). It catalyses the reaction N-acetyl-alpha-D-glucosamine 1-phosphate + UTP + H(+) = UDP-N-acetyl-alpha-D-glucosamine + diphosphate. Its pathway is nucleotide-sugar biosynthesis; UDP-N-acetyl-alpha-D-glucosamine biosynthesis; N-acetyl-alpha-D-glucosamine 1-phosphate from alpha-D-glucosamine 6-phosphate (route II): step 2/2. It participates in nucleotide-sugar biosynthesis; UDP-N-acetyl-alpha-D-glucosamine biosynthesis; UDP-N-acetyl-alpha-D-glucosamine from N-acetyl-alpha-D-glucosamine 1-phosphate: step 1/1. It functions in the pathway bacterial outer membrane biogenesis; LPS lipid A biosynthesis. In terms of biological role, catalyzes the last two sequential reactions in the de novo biosynthetic pathway for UDP-N-acetylglucosamine (UDP-GlcNAc). The C-terminal domain catalyzes the transfer of acetyl group from acetyl coenzyme A to glucosamine-1-phosphate (GlcN-1-P) to produce N-acetylglucosamine-1-phosphate (GlcNAc-1-P), which is converted into UDP-GlcNAc by the transfer of uridine 5-monophosphate (from uridine 5-triphosphate), a reaction catalyzed by the N-terminal domain. The protein is Bifunctional protein GlmU of Rhodopseudomonas palustris (strain ATCC BAA-98 / CGA009).